The sequence spans 326 residues: Beta-ketoacyl-[acyl-carrier-protein] synthase III (326 aa).

Residues C120 and H253 contribute to the active site. The interval Q254–R258 is ACP-binding. The active site involves N283.

It belongs to the thiolase-like superfamily. FabH family. Homodimer.

It localises to the cytoplasm. It carries out the reaction malonyl-[ACP] + acetyl-CoA + H(+) = 3-oxobutanoyl-[ACP] + CO2 + CoA. The protein operates within lipid metabolism; fatty acid biosynthesis. Its function is as follows. Catalyzes the condensation reaction of fatty acid synthesis by the addition to an acyl acceptor of two carbons from malonyl-ACP. Catalyzes the first condensation reaction which initiates fatty acid synthesis and may therefore play a role in governing the total rate of fatty acid production. Possesses both acetoacetyl-ACP synthase and acetyl transacylase activities. Its substrate specificity determines the biosynthesis of branched-chain and/or straight-chain of fatty acids. The chain is Beta-ketoacyl-[acyl-carrier-protein] synthase III from Ralstonia nicotianae (strain ATCC BAA-1114 / GMI1000) (Ralstonia solanacearum).